Reading from the N-terminus, the 229-residue chain is Ribosome maturation factor RimM (229 aa).

Positions 1–21 (MAGHDSGNAKRGRSPSFGVFV) are disordered. Residues 148-229 (ADEFYWVDLI…RVVVDWEADY (82 aa)) enclose the PRC barrel domain.

Belongs to the RimM family. As to quaternary structure, binds ribosomal protein uS19.

The protein resides in the cytoplasm. Functionally, an accessory protein needed during the final step in the assembly of 30S ribosomal subunit, possibly for assembly of the head region. Essential for efficient processing of 16S rRNA. May be needed both before and after RbfA during the maturation of 16S rRNA. It has affinity for free ribosomal 30S subunits but not for 70S ribosomes. This is Ribosome maturation factor RimM from Burkholderia pseudomallei (strain 1106a).